The chain runs to 822 residues: MRKHKAPPSGSPRTMAQDNSQSEPSGGNGESPAATTAAAASVEAPQQSLLLGHNAADASAAAVASRLAPPPCQHPINNSNNNSNISNNSSNSSSSKERPRPTVRFISLLHVASYVLCLCAFSFALYGNVRQTRLEQRMQRLQQLDARIVELELRLEQQQLLHWPAEQTQVLASHPSDRDSSNSNNGSQHLELHVRRELHRLRRDVSHLQLTRRQQRRQAAEAAAAAASGEGGSGGGQCQCQPGPPGPPGPPGKRGKRGKKGDSGEKGDPGLNGISGEKGAAGKPGDKGQKGDVGHPGMDVFQTVKGLKRSVTTLHGGTLGYAEIVAVKDLQEAGVNVSASTVIKLKGEPGEPGPPGPPGEAGQPGAPGERGPPGEIGAQGPQGEAGQPGVAGPPGVAGAPGTKGDKGDRGDRGLTTTIKGDEFPTGIIEGPPGPAGPPGPPGEPGARGEPGPIGPAGPPGEKGPRGKRGKRIFGPGGTKIDEDYDDPPVTLLRGPPGPPGIAGKDGRDGRDGSKGEPGEPGEPGSLGPRGLDGLPGEPGIEGPPGLPGYQGPPGEKGDRGDIGPPGLMGPPGLPGPPGYPGVKGDKGDRGDSYRKMRRRQDDGMSDAPHMPTIEYLYGPPGPPGPMGPPGHTGSQGERGLDGRKGDPGEKGHKGDQGPMGLPGPMGMRGESGPSGPSGKAGIPGAQGETGHKGERGDPGLPGTDGIPGQEGPRGEQGSRGDAGPPGKRGRKGDRGDKGEQGVPGLDAPCPLGADGLPLPGCGWRPPKEPIISTPVHKDYLPDVTQPESNTSDYEQEEEEDDEQAEDNENEYDEYQDNLHNNE.

Disordered stretches follow at residues 1–45 and 66–99; these read MRKH…VEAP and RLAPPPCQHPINNSNNNSNISNNSSNSSSSKERP. Residues 1–104 are Cytoplasmic-facing; sequence MRKHKAPPSG…SKERPRPTVR (104 aa). Residues 11 to 25 show a composition bias toward polar residues; sequence SPRTMAQDNSQSEPS. A compositionally biased stretch (low complexity) spans 76–94; the sequence is INNSNNNSNISNNSSNSSS. A helical; Signal-anchor for type II membrane protein membrane pass occupies residues 105–125; it reads FISLLHVASYVLCLCAFSFAL. At 126–822 the chain is on the extracellular side; that stretch reads YGNVRQTRLE…EYQDNLHNNE (697 aa). Residues 131–162 are a coiled coil; that stretch reads QTRLEQRMQRLQQLDARIVELELRLEQQQLLH. 3 disordered regions span residues 169–188, 205–297, and 345–822; these read QVLASHPSDRDSSNSNNGSQ, VSHL…GHPG, and LKGE…HNNE. The stretch at 194 to 222 forms a coiled coil; it reads VRRELHRLRRDVSHLQLTRRQQRRQAAEA. Collagen-like domains lie at 241–299, 350–409, 430–469, 493–526, 527–586, 621–680, and 681–740; these read QPGP…PGMD, GEPG…KGDR, GPPGPAGPPGPPGEPGARGEPGPIGPAGPPGEKGPRGKRG, RGPPGPPGIAGKDGRDGRDGSKGEPGEPGEPGSL, GPRG…KGDK, GPPG…SGKA, and GIPG…KGEQ. Over residues 242–251 the composition is skewed to pro residues; sequence PGPPGPPGPP. The segment covering 284–293 has biased composition (basic and acidic residues); sequence PGDKGQKGDV. The segment covering 360 to 402 has biased composition (low complexity); that stretch reads EAGQPGAPGERGPPGEIGAQGPQGEAGQPGVAGPPGVAGAPGT. Residues 403 to 412 show a composition bias toward basic and acidic residues; that stretch reads KGDKGDRGDR. The segment covering 431–443 has biased composition (pro residues); the sequence is PPGPAGPPGPPGE. Over residues 504-517 the composition is skewed to basic and acidic residues; sequence KDGRDGRDGSKGEP. Over residues 522–540 the composition is skewed to low complexity; that stretch reads EPGSLGPRGLDGLPGEPGI. Over residues 567-579 the composition is skewed to pro residues; the sequence is LMGPPGLPGPPGY. The span at 583 to 602 shows a compositional bias: basic and acidic residues; that stretch reads KGDKGDRGDSYRKMRRRQDD. A compositionally biased stretch (pro residues) spans 619–628; it reads PPGPPGPMGP. The segment covering 638–655 has biased composition (basic and acidic residues); that stretch reads RGLDGRKGDPGEKGHKGD. A compositionally biased stretch (low complexity) spans 658–668; the sequence is PMGLPGPMGMR. The stretch at 790 to 822 forms a coiled coil; it reads TSDYEQEEEEDDEQAEDNENEYDEYQDNLHNNE. The span at 793–815 shows a compositional bias: acidic residues; the sequence is YEQEEEEDDEQAEDNENEYDEYQ.

The protein resides in the cell membrane. The polypeptide is Collagen alpha chain CG42342 (Drosophila melanogaster (Fruit fly)).